We begin with the raw amino-acid sequence, 864 residues long: Dynamin-1 (864 aa).

The Dynamin-type G domain occupies 28–294 (DLDLPQIAVV…LTNHIRDTLP (267 aa)). Residues 38 to 45 (GGQSAGKS) are G1 motif. Positions 41, 43, 44, 45, 46, 59, and 60 each coordinate GDP. Residues 64-66 (VTR) are G2 motif. Phosphotyrosine is present on Tyr-80. At Tyr-125 the chain carries 3'-nitrotyrosine; alternate. Phosphotyrosine; alternate is present on Tyr-125. Positions 136-139 (DLPG) are G3 motif. The tract at residues 205 to 208 (TKLD) is G4 motif. GDP-binding residues include Lys-206, Asp-208, Asp-211, Asn-236, Arg-237, and Gln-239. The interval 235 to 238 (VNRS) is G5 motif. Ser-306 and Ser-347 each carry phosphoserine. Tyr-354 is modified (phosphotyrosine). Ser-512 is modified (phosphoserine). The PH domain maps to 519–625 (LVIRKGWLTI…WKASFLRAGV (107 aa)). The region spanning 659-750 (VETIRNLVDS…IIGDINTTTV (92 aa)) is the GED domain. Residues 767-864 (SVPAGRRSPT…PESPRPPFDL (98 aa)) are disordered. Residue Ser-774 is modified to Phosphoserine; by GSK3-beta. Ser-778 carries the post-translational modification Phosphoserine. Arg-796 carries the post-translational modification Omega-N-methylarginine. Ser-822 is subject to Phosphoserine. Pro residues predominate over residues 825–843 (PFGPPPQVPSRPNRAPPGV). Phosphoserine occurs at positions 851 and 857.

Belongs to the TRAFAC class dynamin-like GTPase superfamily. Dynamin/Fzo/YdjA family. Homodimer; homodimerization is mediated by the dynamin-type G domain which promotes assembly-stimulated GTPase activity. Homo-tetramer formed from two dimers in the absence of lipid. Oligomerizes into a helical polymer that self-assembles around the vesicle membrane, when associated to the menbrane through lipid binding. Interacts (via C-terminal proline-rich domain (PRD)) with SNX9 (via SH3 domain); this interaction allows regulation of DNM1 self-assembly during late stages of endocytic vesicle formation and supports DNM1's early functions in accelerating clathrin-coated pits (CCPs) maturation in non neuronals cell. Interacts (via C-terminal proline-rich domain (PRD)) with MYO1E (via SH3 domain); this interaction regulates receptor-mediated endocytosis. Interacts with SNX33 (via SH3 domain); this interaction decreases DNM1-dependent endocytosis. Interacts with DIAPH1. Interacts with GRB2 (via SH3 domain); this interaction mediates disassembly of DNM1 polymers, therefore modulates self-assembly. Forms a complex with BIN1 (via SH3 domain) and SH3GL2 (via SH3 domain). Forms a complex with SH3GL2 (via SH3 domain) and AMPH (via SH3 domain). Forms a complex with SH3GL2 (via SH3 domain) and SYNJ1. Interacts with AMPH. Interacts (via C-terminal proline-rich domain (PRD)) with SYT1; this interaction facilitates vesicle fission during clathrin-mediated endocytosis (CME). Interacts (via C-terminal proline-rich domain (PRD)) with PLCG1 (via SH3 domain); this interaction stimulates the release of GDP from DNM1 and enhances DNM1-dependent endocytosis. Interacts with SNPH; this interaction inhibits the binding of DNM1 to AMPH and DNM1-receptor-mediated endocytosis. Interacts with CAV1. Interacts with SH3GLB1 (via SH3 domain). Interacts with PACSIN1 (via SH3 domain), PACSIN2 (via SH3 domain) and PACSIN3 (via SH3 domain). Interacts with UNC119; this interaction decreases DNM1's GTPase activity and affects DNM1's interaction with AMPH. Interacts (GTP-bound form) with DNAJC6; this interaction allows clathrin-coated vesicle (CCV) formation at the plasma membrane. In terms of processing, phosphorylation at Ser-774 by GSK3B/GSK3-beta leads to inactivation of receptor-mediated endocytosis in non-neuronal cells. Dephosphorylation at Ser-774, through the EGFR downstream signaling, leads to activation and regulates early stages of clathrin-mediated endocytosis (CME). Phosphorylated by CDK5 leading to synaptic vesicle endocytosis (SVE) activation.

The protein resides in the cell membrane. It localises to the membrane. The protein localises to the clathrin-coated pit. It is found in the cytoplasmic vesicle. Its subcellular location is the presynapse. The protein resides in the secretory vesicle. It localises to the chromaffin granule. It carries out the reaction GTP + H2O = GDP + phosphate + H(+). With respect to regulation, GTPase activity is activated by 1-phosphatidyl-1D-myo-inositol 4,5-bisphosphate. GTPase activity is inhibited by the heterodimer G protein formed by GNB1 and GNG2 with an IC(50)=400 nM when DNM1 concentration is 5 nM. Functionally, catalyzes the hydrolysis of GTP and utilizes this energy to mediate vesicle scission and participates in many forms of endocytosis, such as clathrin-mediated endocytosis or synaptic vesicle endocytosis as well as rapid endocytosis (RE). Associates to the membrane, through lipid binding, and self-assembles into rings and stacks of interconnected rings through oligomerization to form a helical polymer around the vesicle membrane leading to constriction of invaginated coated pits around their necks. Self-assembly of the helical polymer induces membrane tubules narrowing until the polymer reaches a length sufficient to trigger GTP hydrolysis. Depending on the curvature imposed on the tubules, membrane detachment from the helical polymer upon GTP hydrolysis can cause spontaneous hemifission followed by complete fission. May play a role in regulating early stages of clathrin-mediated endocytosis in non-neuronal cells through its activation by dephosphorylation via the signaling downstream of EGFR. Controls vesicle size at a step before fission, during formation of membrane pits, at hippocampal synapses. Controls plastic adaptation of the synaptic vesicle recycling machinery to high levels of activity. Mediates rapid endocytosis (RE), a Ca(2+)-dependent and clathrin- and K(+)-independent process in chromaffin cells. Microtubule-associated force-producing protein involved in producing microtubule bundles and able to bind and hydrolyze GTP. Through its interaction with DNAJC6, acts during the early steps of clathrin-coated vesicle (CCV) formation. In Homo sapiens (Human), this protein is Dynamin-1.